We begin with the raw amino-acid sequence, 242 residues long: Myb-related protein MYBAS2 (242 aa).

HTH myb-type domains follow at residues 5–61 and 62–112; these read REEI…HPGL and KRGR…RKKA. Residues 33–57 constitute a DNA-binding region (H-T-H motif); that stretch reads WDFIAKVSGLNRTGKSCRLRWVNYL. The Bipartite nuclear localization signal 1 signature appears at 62–65; sequence KRGR. Residues 85–108 constitute a DNA-binding region (H-T-H motif); that stretch reads WSRIARRLPGRTDNEIKNYWRTHM. A Bipartite nuclear localization signal 2 motif is present at residues 109–117; the sequence is RKKAQERKS. The disordered stretch occupies residues 110-133; sequence KKAQERKSNMSPSSSSSSLTYQSC. A compositionally biased stretch (low complexity) spans 118–133; the sequence is NMSPSSSSSSLTYQSC.

The protein resides in the nucleus. Transcription factor. The sequence is that of Myb-related protein MYBAS2 (MYBAS2) from Oryza sativa subsp. japonica (Rice).